A 413-amino-acid polypeptide reads, in one-letter code: Serine hydroxymethyltransferase (413 aa).

(6S)-5,6,7,8-tetrahydrofolate-binding positions include leucine 117 and 121–123; that span reads GHL. The residue at position 226 (lysine 226) is an N6-(pyridoxal phosphate)lysine. Residues glutamate 239 and 349-351 each bind (6S)-5,6,7,8-tetrahydrofolate; that span reads SPF.

Belongs to the SHMT family. As to quaternary structure, homodimer. It depends on pyridoxal 5'-phosphate as a cofactor.

The protein resides in the cytoplasm. It catalyses the reaction (6R)-5,10-methylene-5,6,7,8-tetrahydrofolate + glycine + H2O = (6S)-5,6,7,8-tetrahydrofolate + L-serine. It functions in the pathway one-carbon metabolism; tetrahydrofolate interconversion. It participates in amino-acid biosynthesis; glycine biosynthesis; glycine from L-serine: step 1/1. Functionally, catalyzes the reversible interconversion of serine and glycine with tetrahydrofolate (THF) serving as the one-carbon carrier. This reaction serves as the major source of one-carbon groups required for the biosynthesis of purines, thymidylate, methionine, and other important biomolecules. Also exhibits THF-independent aldolase activity toward beta-hydroxyamino acids, producing glycine and aldehydes, via a retro-aldol mechanism. This Bacillus cereus (strain AH187) protein is Serine hydroxymethyltransferase.